Reading from the N-terminus, the 557-residue chain is Myo-inositol transporter 2 (557 aa).

The Cytoplasmic portion of the chain corresponds to M1–K76. The disordered stretch occupies residues E24 to G69. Basic and acidic residues predominate over residues S30–E44. A helical membrane pass occupies residues I77 to Y97. Residues D98–T99 are Extracellular-facing. A helical membrane pass occupies residues G100–G120. Topologically, residues Q121–E123 are cytoplasmic. The chain crosses the membrane as a helical span at residues L124 to A144. Residues D145–D157 are Extracellular-facing. A helical membrane pass occupies residues A158–V178. Residues G179–R180 lie on the Cytoplasmic side of the membrane. The helical transmembrane segment at F181–L201 threads the bilayer. At A202–R209 the chain is on the extracellular side. Residues L210–A230 form a helical membrane-spanning segment. Residues A231–R240 lie on the Cytoplasmic side of the membrane. The chain crosses the membrane as a helical span at residues I241–P261. At E262–S367 the chain is on the extracellular side. A helical transmembrane segment spans residues I368–F388. Over I389–R396 the chain is Cytoplasmic. The chain crosses the membrane as a helical span at residues I397–H417. The Extracellular segment spans residues F418–Q432. A helical membrane pass occupies residues Y433–I453. Residues P454–L468 are Cytoplasmic-facing. Residues G469–L489 form a helical membrane-spanning segment. Residues T490 to T498 are Extracellular-facing. The chain crosses the membrane as a helical span at residues G499–Y519. At P520 to A557 the chain is on the cytoplasmic side.

This sequence belongs to the major facilitator superfamily. Sugar transporter (TC 2.A.1.1) family.

Its subcellular location is the membrane. The catalysed reaction is myo-inositol(out) + H(+)(out) = myo-inositol(in) + H(+)(in). Transporter for myo-inositol. The protein is Myo-inositol transporter 2 (itr2) of Schizosaccharomyces pombe (strain 972 / ATCC 24843) (Fission yeast).